A 279-amino-acid polypeptide reads, in one-letter code: 2-dehydro-3-deoxyphosphooctonate aldolase (279 aa).

The protein belongs to the KdsA family.

It localises to the cytoplasm. It carries out the reaction D-arabinose 5-phosphate + phosphoenolpyruvate + H2O = 3-deoxy-alpha-D-manno-2-octulosonate-8-phosphate + phosphate. The protein operates within carbohydrate biosynthesis; 3-deoxy-D-manno-octulosonate biosynthesis; 3-deoxy-D-manno-octulosonate from D-ribulose 5-phosphate: step 2/3. Its pathway is bacterial outer membrane biogenesis; lipopolysaccharide biosynthesis. The chain is 2-dehydro-3-deoxyphosphooctonate aldolase from Azoarcus sp. (strain BH72).